We begin with the raw amino-acid sequence, 533 residues long: Glucose-6-phosphate isomerase (533 aa).

Glu330 serves as the catalytic Proton donor. Catalysis depends on residues His359 and Lys461.

The protein belongs to the GPI family.

It localises to the cytoplasm. It catalyses the reaction alpha-D-glucose 6-phosphate = beta-D-fructose 6-phosphate. The protein operates within carbohydrate biosynthesis; gluconeogenesis. It functions in the pathway carbohydrate degradation; glycolysis; D-glyceraldehyde 3-phosphate and glycerone phosphate from D-glucose: step 2/4. In terms of biological role, catalyzes the reversible isomerization of glucose-6-phosphate to fructose-6-phosphate. The chain is Glucose-6-phosphate isomerase from Prochlorococcus marinus (strain SARG / CCMP1375 / SS120).